The chain runs to 241 residues: Demethylmenaquinone methyltransferase (241 aa).

S-adenosyl-L-methionine-binding positions include T60, D81, and 106–107 (DA).

It belongs to the class I-like SAM-binding methyltransferase superfamily. MenG/UbiE family.

The enzyme catalyses a 2-demethylmenaquinol + S-adenosyl-L-methionine = a menaquinol + S-adenosyl-L-homocysteine + H(+). The protein operates within quinol/quinone metabolism; menaquinone biosynthesis; menaquinol from 1,4-dihydroxy-2-naphthoate: step 2/2. Functionally, methyltransferase required for the conversion of demethylmenaquinol (DMKH2) to menaquinol (MKH2). This chain is Demethylmenaquinone methyltransferase, found in Staphylococcus aureus (strain MRSA252).